Here is a 248-residue protein sequence, read N- to C-terminus: ATP synthase subunit a, chloroplastic (248 aa).

Transmembrane regions (helical) follow at residues 35 to 55 (GQVF…SFLG), 94 to 114 (VPYI…GALI), 133 to 153 (INTT…AGLS), 202 to 222 (VFTL…GLFA), and 224 to 244 (SIQA…AMEG).

This sequence belongs to the ATPase A chain family. F-type ATPases have 2 components, CF(1) - the catalytic core - and CF(0) - the membrane proton channel. CF(1) has five subunits: alpha(3), beta(3), gamma(1), delta(1), epsilon(1). CF(0) has four main subunits: a, b, b' and c.

It is found in the plastid. The protein resides in the chloroplast thylakoid membrane. Key component of the proton channel; it plays a direct role in the translocation of protons across the membrane. This is ATP synthase subunit a, chloroplastic from Porphyra purpurea (Red seaweed).